A 212-amino-acid polypeptide reads, in one-letter code: Probable GTP-binding protein EngB (212 aa).

The EngB-type G domain maps to 25 to 199 (FGYEVAFAGR…WAKLDEWMEY (175 aa)). Residues 33-40 (GRSNAGKS), 60-64 (GRTQL), 78-81 (DLPG), 145-148 (TKSD), and 178-180 (FSS) contribute to the GTP site. Ser40 and Thr62 together coordinate Mg(2+).

Belongs to the TRAFAC class TrmE-Era-EngA-EngB-Septin-like GTPase superfamily. EngB GTPase family. Mg(2+) serves as cofactor.

Functionally, necessary for normal cell division and for the maintenance of normal septation. This Hydrogenovibrio crunogenus (strain DSM 25203 / XCL-2) (Thiomicrospira crunogena) protein is Probable GTP-binding protein EngB.